A 149-amino-acid chain; its full sequence is Transcriptional repressor NrdR (149 aa).

Residues 3 to 34 (CPFCFAVDTKVIDSRLVGEGSSVRRRRQCLVC) fold into a zinc finger. Residues 49 to 139 (PRVVKSNDVR…VYRSFEDIRE (91 aa)) enclose the ATP-cone domain.

It belongs to the NrdR family. Zn(2+) is required as a cofactor.

In terms of biological role, negatively regulates transcription of bacterial ribonucleotide reductase nrd genes and operons by binding to NrdR-boxes. The chain is Transcriptional repressor NrdR from Cronobacter sakazakii (strain ATCC BAA-894) (Enterobacter sakazakii).